A 226-amino-acid chain; its full sequence is Large ribosomal subunit protein uL1 (226 aa).

This sequence belongs to the universal ribosomal protein uL1 family. As to quaternary structure, part of the 50S ribosomal subunit.

Its function is as follows. Binds directly to 23S rRNA. The L1 stalk is quite mobile in the ribosome, and is involved in E site tRNA release. Protein L1 is also a translational repressor protein, it controls the translation of the L11 operon by binding to its mRNA. The sequence is that of Large ribosomal subunit protein uL1 from Borrelia garinii subsp. bavariensis (strain ATCC BAA-2496 / DSM 23469 / PBi) (Borreliella bavariensis).